Reading from the N-terminus, the 343-residue chain is MLFAMQLASASVLPMVLKSAIELDLLEIIRGQDTCMSPTEIASHLPTTNPDAPAMVDRILRLLSCYSVVTCSVRSVDDQRVYGLAPVCKYLTKNQDGVSIAALCLMNQDKVLMESWYHLKDAVLDGGIPFNKAYGMSSFEYHGTDPRFNKVFNRGMSDHSTITMKKVFQAYQGFQGLTSLVDVGGGTGATLTMILSKYPTIRCINFDLPHVIEDAPEYPGIEHVGGDMFVSVPKGDAIFMKWICHDWSDEHCLKLLKNCYDALPNNGKVILAECILPEVPDSSLATKGVVHIDVITVAHNPGGKERTEKEFEALAKAAGFQGFQVFCNAFNTYIIEFSKQICN.

Asn107 is a (E)-ferulate binding site. Positions 184, 207, 227, 228, 240, and 241 each coordinate S-adenosyl-L-homocysteine. Catalysis depends on His245, which acts as the Proton acceptor. Asp246 contacts (E)-5-hydroxyferulate. Active-site residues include Glu273 and Glu305.

The protein belongs to the class I-like SAM-binding methyltransferase superfamily. Cation-independent O-methyltransferase family. COMT subfamily. In terms of assembly, homodimer.

It catalyses the reaction (E)-5-hydroxyferulate + S-adenosyl-L-methionine = (E)-sinapate + S-adenosyl-L-homocysteine + H(+). It carries out the reaction luteolin + S-adenosyl-L-methionine = chrysoeriol + S-adenosyl-L-homocysteine + H(+). The enzyme catalyses quercetin + S-adenosyl-L-methionine = isorhamnetin + S-adenosyl-L-homocysteine + H(+). The catalysed reaction is (E)-caffeate + S-adenosyl-L-methionine = (E)-ferulate + S-adenosyl-L-homocysteine + H(+). It catalyses the reaction a 3'-hydroxyflavone + S-adenosyl-L-methionine = a 3'-methoxyflavone + S-adenosyl-L-homocysteine + H(+). The protein operates within flavonoid metabolism. In terms of biological role, catalyzes the 3'-O-methylation of the flavonoids luteolin and quercetin. Catalyzes the 3- of 5-O-methylation of the phenylpropanoids caffeate and 5-hydroxyferulate. Substrate preference is 5-hydroxyferulate &gt; luteolin &gt; quercetin &gt; caffeate. Apigenin, kempferol and 3,4-dimethylquercetin do not seem to be substrates for methylation. The protein is Flavone 3'-O-methyltransferase OMT1 of Chrysosplenium americanum (American golden saxifrage).